The following is a 334-amino-acid chain: N-acetyl-gamma-glutamyl-phosphate reductase (334 aa).

The active site involves Cys-154.

Belongs to the NAGSA dehydrogenase family. Type 1 subfamily.

It is found in the cytoplasm. It carries out the reaction N-acetyl-L-glutamate 5-semialdehyde + phosphate + NADP(+) = N-acetyl-L-glutamyl 5-phosphate + NADPH + H(+). It functions in the pathway amino-acid biosynthesis; L-arginine biosynthesis; N(2)-acetyl-L-ornithine from L-glutamate: step 3/4. In terms of biological role, catalyzes the NADPH-dependent reduction of N-acetyl-5-glutamyl phosphate to yield N-acetyl-L-glutamate 5-semialdehyde. This Aliivibrio fischeri (strain ATCC 700601 / ES114) (Vibrio fischeri) protein is N-acetyl-gamma-glutamyl-phosphate reductase.